The chain runs to 251 residues: 5'-nucleotidase SurE (251 aa).

A divalent metal cation-binding residues include D8, D9, S40, and N95.

This sequence belongs to the SurE nucleotidase family. The cofactor is a divalent metal cation.

The protein localises to the cytoplasm. The enzyme catalyses a ribonucleoside 5'-phosphate + H2O = a ribonucleoside + phosphate. Nucleotidase that shows phosphatase activity on nucleoside 5'-monophosphates. The chain is 5'-nucleotidase SurE from Desulfitobacterium hafniense (strain DSM 10664 / DCB-2).